We begin with the raw amino-acid sequence, 453 residues long: Sodium/alanine symporter AgcS (453 aa).

Residues 1–17 (MDFVSLVNTVNSFVWGP) are Extracellular-facing. Residues 18–32 (YMLVLLLGTGIFLTL) form a helical membrane-spanning segment. The Cytoplasmic portion of the chain corresponds to 33 to 67 (RLGFMQIHTLPYALKLAFSKHQDETSEGDISHFQA). The chain crosses the membrane as a helical span at residues 68-89 (LMTALAATIGTGNIAGVATAYV). A D-alanine-binding site is contributed by Thr75. Residues Thr75 and Gly79 each contribute to the L-alanine site. Residue Asn80 participates in D-alanine binding. Residues 90-92 (LGG) are Extracellular-facing. Residues 93–111 (PGAIFWMWVTAFFGMATKY) traverse the membrane as a helical segment. The Cytoplasmic segment spans residues 112 to 148 (AEAVLAIKYRTVDDNGEMAGGPMYFLEKGLPDHGLGK). Residues 149–179 (ILGVAFAFFGAFAAFGIGNMVQTNSVADAVA) form a helical membrane-spanning segment. Gln170 serves as a coordination point for D-alanine. L-alanine is bound at residue Gln170. Residues 180 to 186 (SNFGVDP) are Extracellular-facing. Residues 187 to 202 (LITGFVLAIFTAAVIL) traverse the membrane as a helical segment. The Cytoplasmic segment spans residues 203 to 206 (GGIK). A helical membrane pass occupies residues 207 to 233 (SIGKATGIIVPFMAVFYILAGLVILAM). The Extracellular segment spans residues 234-258 (NIGYIIPAFGTIFSSAFNFSAGFGA). Residues 259–274 (LIGTAIMWGVKRGVFS) form a helical membrane-spanning segment. 273-274 (FS) serves as a coordination point for D-alanine. 273-276 (FSNE) lines the L-alanine pocket. Over 275–300 (NEAGLGSAPIAAAAAKTDHPGRQALV) the chain is Cytoplasmic. The helical transmembrane segment at 301 to 322 (SMTGTFLDTIVVCTITGLVLTI) threads the bilayer. Over 323–350 (AGLKAFPGLTDLTGASLTAASFDALMPM) the chain is Extracellular. The chain crosses the membrane as a helical span at residues 351–378 (GGLIVTIGLVFFAYSTVLGWSYYGEKCF). Topologically, residues 379–386 (EYLIGTKG) are cytoplasmic. Residues 387 to 403 (IRLYRIAFVLVAFWGAT) traverse the membrane as a helical segment. The Extracellular segment spans residues 404 to 408 (ASLPL). A helical transmembrane segment spans residues 409 to 430 (VWNIADTLNGAMAIPNLIGLLL). Over 431 to 453 (LSGVVVSETKAFNEIRKNEAKNA) the chain is Cytoplasmic.

The protein belongs to the alanine or glycine:cation symporter (AGCS) (TC 2.A.25) family.

It localises to the cell membrane. The enzyme catalyses D-alanine(in) + Na(+)(in) = D-alanine(out) + Na(+)(out). It catalyses the reaction L-alanine(in) + Na(+)(in) = L-alanine(out) + Na(+)(out). It carries out the reaction glycine(in) + Na(+)(in) = glycine(out) + Na(+)(out). Its function is as follows. Catalyzes the sodium-dependent uptake of extracellular D-alanine and L-alanine. Can also transport glycine. Binds glycine and both enantiomers of alanine, while strictly excluding other amino acids. The polypeptide is Sodium/alanine symporter AgcS (Methanococcus maripaludis (strain DSM 14266 / JCM 13030 / NBRC 101832 / S2 / LL)).